The sequence spans 70 residues: Small ribosomal subunit protein bS21A (70 aa).

This sequence belongs to the bacterial ribosomal protein bS21 family.

The protein is Small ribosomal subunit protein bS21A of Paraburkholderia xenovorans (strain LB400).